Consider the following 622-residue polypeptide: Carbon monoxide dehydrogenase (622 aa).

Residues Cys-40, Cys-49, Cys-52, Cys-57, and Cys-68 each coordinate [4Fe-4S] cluster. The [Ni-4Fe-5S] cluster site is built by His-256, Cys-334, Cys-442, Cys-473, and Cys-514.

Belongs to the Ni-containing carbon monoxide dehydrogenase family. As to quaternary structure, homodimer. Requires [4Fe-4S] cluster as cofactor. [Ni-4Fe-5S] cluster serves as cofactor.

The catalysed reaction is CO + 2 oxidized [2Fe-2S]-[ferredoxin] + H2O = 2 reduced [2Fe-2S]-[ferredoxin] + CO2 + 2 H(+). CODH oxidizes carbon monoxide coupled, via CooF, to the reduction of a hydrogen cation by a hydrogenase (possibly CooH). This chain is Carbon monoxide dehydrogenase (cooS), found in Archaeoglobus fulgidus (strain ATCC 49558 / DSM 4304 / JCM 9628 / NBRC 100126 / VC-16).